The chain runs to 105 residues: Large ribosomal subunit protein eL30 (105 aa).

It belongs to the eukaryotic ribosomal protein eL30 family.

The sequence is that of Large ribosomal subunit protein eL30 (RPL30) from Eremothecium gossypii (strain ATCC 10895 / CBS 109.51 / FGSC 9923 / NRRL Y-1056) (Yeast).